The sequence spans 256 residues: Thiazole synthase (256 aa).

Lysine 98 functions as the Schiff-base intermediate with DXP in the catalytic mechanism. 1-deoxy-D-xylulose 5-phosphate-binding positions include glycine 159, 185–186 (AG), and 207–208 (NT).

It belongs to the ThiG family. As to quaternary structure, homotetramer. Forms heterodimers with either ThiH or ThiS.

It localises to the cytoplasm. The enzyme catalyses [ThiS sulfur-carrier protein]-C-terminal-Gly-aminoethanethioate + 2-iminoacetate + 1-deoxy-D-xylulose 5-phosphate = [ThiS sulfur-carrier protein]-C-terminal Gly-Gly + 2-[(2R,5Z)-2-carboxy-4-methylthiazol-5(2H)-ylidene]ethyl phosphate + 2 H2O + H(+). It functions in the pathway cofactor biosynthesis; thiamine diphosphate biosynthesis. Catalyzes the rearrangement of 1-deoxy-D-xylulose 5-phosphate (DXP) to produce the thiazole phosphate moiety of thiamine. Sulfur is provided by the thiocarboxylate moiety of the carrier protein ThiS. In vitro, sulfur can be provided by H(2)S. This Syntrophobacter fumaroxidans (strain DSM 10017 / MPOB) protein is Thiazole synthase.